The sequence spans 494 residues: Ribose import ATP-binding protein RbsA (494 aa).

2 ABC transporter domains span residues 2-239 (IDMR…VGRQ) and 251-493 (IGEE…TGGN). An ATP-binding site is contributed by 34–41 (GENGAGKS).

The protein belongs to the ABC transporter superfamily. Ribose importer (TC 3.A.1.2.1) family. The complex is composed of an ATP-binding protein (RbsA), two transmembrane proteins (RbsC) and a solute-binding protein (RbsB).

The protein resides in the cell membrane. The enzyme catalyses D-ribose(out) + ATP + H2O = D-ribose(in) + ADP + phosphate + H(+). In terms of biological role, part of the ABC transporter complex RbsABC involved in ribose import. Responsible for energy coupling to the transport system. The sequence is that of Ribose import ATP-binding protein RbsA from Geobacillus kaustophilus (strain HTA426).